We begin with the raw amino-acid sequence, 312 residues long: tRNA-cytidine(32) 2-sulfurtransferase (312 aa).

Positions 47 to 52 (SGGKDS) match the PP-loop motif motif. Residues C122, C125, and C213 each contribute to the [4Fe-4S] cluster site.

It belongs to the TtcA family. In terms of assembly, homodimer. The cofactor is Mg(2+). Requires [4Fe-4S] cluster as cofactor.

Its subcellular location is the cytoplasm. The catalysed reaction is cytidine(32) in tRNA + S-sulfanyl-L-cysteinyl-[cysteine desulfurase] + AH2 + ATP = 2-thiocytidine(32) in tRNA + L-cysteinyl-[cysteine desulfurase] + A + AMP + diphosphate + H(+). The protein operates within tRNA modification. Functionally, catalyzes the ATP-dependent 2-thiolation of cytidine in position 32 of tRNA, to form 2-thiocytidine (s(2)C32). The sulfur atoms are provided by the cysteine/cysteine desulfurase (IscS) system. The chain is tRNA-cytidine(32) 2-sulfurtransferase from Shewanella frigidimarina (strain NCIMB 400).